A 251-amino-acid chain; its full sequence is D-aminoacyl-tRNA deacylase (251 aa).

Belongs to the DtdA deacylase family. Monomer. Zn(2+) serves as cofactor.

It catalyses the reaction a D-aminoacyl-tRNA + H2O = a tRNA + a D-alpha-amino acid + H(+). The enzyme catalyses glycyl-tRNA(Ala) + H2O = tRNA(Ala) + glycine + H(+). D-aminoacyl-tRNA deacylase with broad substrate specificity. By recycling D-aminoacyl-tRNA to D-amino acids and free tRNA molecules, this enzyme counteracts the toxicity associated with the formation of D-aminoacyl-tRNA entities in vivo. The polypeptide is D-aminoacyl-tRNA deacylase (Pyrobaculum aerophilum (strain ATCC 51768 / DSM 7523 / JCM 9630 / CIP 104966 / NBRC 100827 / IM2)).